The sequence spans 310 residues: Glutaminase (310 aa).

Residues serine 67, asparagine 118, glutamate 161, asparagine 168, tyrosine 192, tyrosine 244, and valine 262 each coordinate substrate.

This sequence belongs to the glutaminase family. As to quaternary structure, homotetramer.

The enzyme catalyses L-glutamine + H2O = L-glutamate + NH4(+). The protein is Glutaminase of Legionella pneumophila (strain Corby).